The primary structure comprises 154 residues: Transcriptional repressor NrdR (154 aa).

Residues 3–34 fold into a zinc finger; sequence CPFCGANDTKVIDSRLVAEGEQVRRRRECLAC. The region spanning 49 to 139 is the ATP-cone domain; sequence PRLIKTDGSR…VYRRFQDLNE (91 aa).

This sequence belongs to the NrdR family. The cofactor is Zn(2+).

Negatively regulates transcription of bacterial ribonucleotide reductase nrd genes and operons by binding to NrdR-boxes. The chain is Transcriptional repressor NrdR from Pseudomonas fluorescens (strain ATCC BAA-477 / NRRL B-23932 / Pf-5).